A 407-amino-acid polypeptide reads, in one-letter code: tRNA (guanine(26)-N(2))-dimethyltransferase (407 aa).

Residues 10-400 form the Trm1 methyltransferase domain; it reads AVTHEGRSII…APWGEVLEAV (391 aa). S-adenosyl-L-methionine contacts are provided by Arg-50, Arg-82, Asp-99, and Glu-128.

It belongs to the class I-like SAM-binding methyltransferase superfamily. Trm1 family.

It catalyses the reaction guanosine(26) in tRNA + 2 S-adenosyl-L-methionine = N(2)-dimethylguanosine(26) in tRNA + 2 S-adenosyl-L-homocysteine + 2 H(+). Its function is as follows. Dimethylates a single guanine residue at position 26 of a number of tRNAs using S-adenosyl-L-methionine as donor of the methyl groups. This is tRNA (guanine(26)-N(2))-dimethyltransferase from Aeropyrum pernix (strain ATCC 700893 / DSM 11879 / JCM 9820 / NBRC 100138 / K1).